The following is a 201-amino-acid chain: Putative 3-methyladenine DNA glycosylase (201 aa).

Belongs to the DNA glycosylase MPG family.

The sequence is that of Putative 3-methyladenine DNA glycosylase from Clostridium novyi (strain NT).